We begin with the raw amino-acid sequence, 302 residues long: Aspartate carbamoyltransferase catalytic subunit (302 aa).

Residues Arg55 and Thr56 each coordinate carbamoyl phosphate. Lys83 is a binding site for L-aspartate. Positions 105, 133, and 136 each coordinate carbamoyl phosphate. L-aspartate contacts are provided by Arg166 and Arg222. Carbamoyl phosphate contacts are provided by Gly262 and Pro263.

This sequence belongs to the aspartate/ornithine carbamoyltransferase superfamily. ATCase family. Heterododecamer (2C3:3R2) of six catalytic PyrB chains organized as two trimers (C3), and six regulatory PyrI chains organized as three dimers (R2).

The enzyme catalyses carbamoyl phosphate + L-aspartate = N-carbamoyl-L-aspartate + phosphate + H(+). It participates in pyrimidine metabolism; UMP biosynthesis via de novo pathway; (S)-dihydroorotate from bicarbonate: step 2/3. Catalyzes the condensation of carbamoyl phosphate and aspartate to form carbamoyl aspartate and inorganic phosphate, the committed step in the de novo pyrimidine nucleotide biosynthesis pathway. The polypeptide is Aspartate carbamoyltransferase catalytic subunit (Solibacter usitatus (strain Ellin6076)).